Reading from the N-terminus, the 37-residue chain is MVESLLSGIVLGMIPITLAGLFVTAYLQYRRGDQLKI.

Residues 5 to 25 (LLSGIVLGMIPITLAGLFVTA) form a helical membrane-spanning segment.

The protein belongs to the PetG family. As to quaternary structure, the 4 large subunits of the cytochrome b6-f complex are cytochrome b6, subunit IV (17 kDa polypeptide, PetD), cytochrome f and the Rieske protein, while the 4 small subunits are PetG, PetL, PetM and PetN. The complex functions as a dimer.

Its subcellular location is the plastid. It is found in the chloroplast thylakoid membrane. Component of the cytochrome b6-f complex, which mediates electron transfer between photosystem II (PSII) and photosystem I (PSI), cyclic electron flow around PSI, and state transitions. PetG is required for either the stability or assembly of the cytochrome b6-f complex. This is Cytochrome b6-f complex subunit 5 from Mesostigma viride (Green alga).